A 157-amino-acid polypeptide reads, in one-letter code: Short-type peptidyl-prolyl cis-trans isomerase (157 aa).

Residues 1–95 (MINLIKKGDY…RDERLIQEIP (95 aa)) enclose the PPIase FKBP-type domain. The interval 86–137 (RDERLIQEIPKEMFADADFEPQEGMLILASGIPAKIIKVTDDTVTLDFNHEL) is IF.

Belongs to the FKBP-type PPIase family.

Its subcellular location is the cytoplasm. The catalysed reaction is [protein]-peptidylproline (omega=180) = [protein]-peptidylproline (omega=0). Catalyzes the cis-trans isomerization of peptidyl prolyl bonds and accelerates protein folding. Also exhibits chaperone-like activity. The chain is Short-type peptidyl-prolyl cis-trans isomerase from Methanocaldococcus jannaschii (strain ATCC 43067 / DSM 2661 / JAL-1 / JCM 10045 / NBRC 100440) (Methanococcus jannaschii).